A 262-amino-acid polypeptide reads, in one-letter code: Carbonic anhydrase 1 (262 aa).

A2 carries the post-translational modification N-acetylalanine. Residues 4–261 form the Alpha-carbonic anhydrase domain; sequence LNWSYEGENG…LKGRQVKASF (258 aa). The active-site Proton donor/acceptor is the H65. Residues H95, H97, and H120 each contribute to the Zn(2+) site. Substrate contacts are provided by residues T200 and 200–201; that span reads TH.

This sequence belongs to the alpha-carbonic anhydrase family. Requires Zn(2+) as cofactor.

It is found in the cytoplasm. It carries out the reaction hydrogencarbonate + H(+) = CO2 + H2O. The catalysed reaction is urea = cyanamide + H2O. Inhibited by acetazolamide. Catalyzes the reversible hydration of carbon dioxide. Can hydrate cyanamide to urea. The polypeptide is Carbonic anhydrase 1 (CA1) (Monodelphis domestica (Gray short-tailed opossum)).